We begin with the raw amino-acid sequence, 70 residues long: Small ribosomal subunit protein bS21 (70 aa).

This sequence belongs to the bacterial ribosomal protein bS21 family.

The chain is Small ribosomal subunit protein bS21 from Laribacter hongkongensis (strain HLHK9).